Reading from the N-terminus, the 734-residue chain is Photosystem I P700 chlorophyll a apoprotein A2 (734 aa).

Helical transmembrane passes span 46–69 (IFAS…FHVA), 135–158 (LYTG…LHLQ), 175–199 (LNHH…HVAI), 273–291 (MAHH…GHMY), 330–353 (IHFQ…QHMY), 369–395 (AALY…IFFI), 417–439 (AIIS…LYVH), and 517–535 (FLVH…LILV). The [4Fe-4S] cluster site is built by cysteine 559 and cysteine 568. 2 helical membrane passes run 575–596 (AFYL…YWHW) and 643–665 (LSVW…MFLI). The chlorophyll a site is built by histidine 654, methionine 662, and tyrosine 670. Phylloquinone is bound at residue tryptophan 671. A helical transmembrane segment spans residues 707 to 727 (LVGLAHFSVGYIFTYAAFLIA).

It belongs to the PsaA/PsaB family. The PsaA/B heterodimer binds the P700 chlorophyll special pair and subsequent electron acceptors. PSI consists of a core antenna complex that captures photons, and an electron transfer chain that converts photonic excitation into a charge separation. The eukaryotic PSI reaction center is composed of at least 11 subunits. Requires P700 is a chlorophyll a/chlorophyll a' dimer, A0 is one or more chlorophyll a, A1 is one or both phylloquinones and FX is a shared 4Fe-4S iron-sulfur center. as cofactor.

It localises to the plastid. Its subcellular location is the chloroplast thylakoid membrane. It catalyses the reaction reduced [plastocyanin] + hnu + oxidized [2Fe-2S]-[ferredoxin] = oxidized [plastocyanin] + reduced [2Fe-2S]-[ferredoxin]. Functionally, psaA and PsaB bind P700, the primary electron donor of photosystem I (PSI), as well as the electron acceptors A0, A1 and FX. PSI is a plastocyanin-ferredoxin oxidoreductase, converting photonic excitation into a charge separation, which transfers an electron from the donor P700 chlorophyll pair to the spectroscopically characterized acceptors A0, A1, FX, FA and FB in turn. Oxidized P700 is reduced on the lumenal side of the thylakoid membrane by plastocyanin. In Capsella bursa-pastoris (Shepherd's purse), this protein is Photosystem I P700 chlorophyll a apoprotein A2.